The primary structure comprises 43 residues: Phi-Lf prophage-derived putative minor coat protein (43 aa).

This chain is Phi-Lf prophage-derived putative minor coat protein (gVII-1), found in Xanthomonas campestris pv. campestris (strain ATCC 33913 / DSM 3586 / NCPPB 528 / LMG 568 / P 25).